The following is a 2779-amino-acid chain: MAEDSGALESSYDFSIVQPDDHEYGEADIRLAGSSNDLSSLQNVSASTTRGTKGKGRLDSLKENLYKQQERLTALKERALRKSQDERHKSSMSDSMESLKTLGQKLTVLKTRSGDSSTPLVSPTKDSDPGDVSLLQTSGSEKLLMLTQRTEQNRALLEQRKRDLAKSLLSVKSNIGHQTTAELGSSMTDLRHAASVSNPPVSRHRSALDLEAQGQEAVDESRVKLLRSRMKLTELKQGRQEQELNELRTELAKRAKLIERLELSGAELQRTLTQRNEELEQLRVVQAEEDSLKVQENSRLQGEVLVLRERLAELENVNDLLETTRCELQEELTTARERQRNLELEQEQEKASRSPQSEAAHTDAQVSAELAKQLQELTNQLADLQATNEELRQQVAAQAKLQVTDEIVSQRLEELEATIAAQLLELQEQKSAMAAQNEELAEKTTELNVLNVNLRLLEEKLAQSSRSKPLFLEDHSEDSAASKQMQEDLQQLKLKLDETNKANIKLKLKCKQAEKKLQKFQSQDGQQQLASLLADNEELQQRIAVLEDEKGQWQLANMQEDDRQPEQSTESNNPLQLETIRLLEEQKLELQQALEALLSSSSSAESIEIVERHHLECLGQRRPASEGDAQEQKQVHPPGPSHVSELTQTEQTEEEDSSGETLSQLRERLELFTQERGEVLDKLEQLSAENLQLQARLEESSSSLQLLQREREKDLISSTSTSSNLSQELSSMQRSSEVVATLDAGEGGPVLFEKCEKSLSKLNSELEAYRKANDRQAKFNVSKKLAKEAKNCHTQLSELLHKVKEASTAVETVTVVETVVAVTAPNGKALAEYEQLNAQNAELKAVISRLRQELDELRESYPETEAPLAIVGSDSQREDEILQLQSQLEDARSLQAEQRQQIEEQVDQIKELRQTEAEQLQLVARQSAEITQLQLQSEQFDQLLNSKEMSHEKQLEQQTRIRRELEARAESLEGELSILQTLVAEQKQQLIESVSESEHALNLKMLELQSAQEELRELRAKEDPDQLREALRVSKSLVAQQVRELTSSQETVDALNQQIQEYQGLEHAHKEEQFKNRELREKLKKYALNLKKRTQDNADLEQKVQELTSQLQEQQELVKQKEEVEREPIVDNHRVEQLQQQVSKLNEDLKAKIHLNLENRDALRQLKQQIQEQEQLIQERDAELQDANLVSKELRRERQEADQEVFQLGQENSRLREEISKLQEEIHNLGQRVNEEPTAVEDLRRQLEAKSKKFEKSKELIKLRNATIQSLQRELQQLQQDQDSEVEHVRNARAAHEQLRLEKDAEITALRQEILKLERSRAAGEGDDTITKTSHQLLESQSQQQAESLQVAERELQQLRVQLTAAQEQHALLAQQYASDKANFEMTIARLETLHEGIQAKLQEDASYIESLEAQNTELQARSAALEEQAASQANQQAASQDKVQILEQQLKEQREQEEQKRQQDQQLQERFYELGQREQAQSRQLELLTSEAEESRQQLAGLRTEYESLLAKHSQLTATAQAEREQMSSHSQEELAELRQQLDVKEADLHRQRQVYDAKLAAKATELDELECDLNSHVERAAAETRELCQQLERSQELVAQRTEELQRLNEEFQEVERERSTLSREVTLLRLQHDSAEQDVLELQELRMQAMQDKTEMDNLRTQIDALCANHSQELQALQQRIAELDTLGQNQTDDQVYIETENKRLAEQLSELQAQLARQQHQQQQQQHHHPAVQSQQHPPPASLFFGGDALAAPSPFDEIAQPLRVSSLAASAPPPISPPPTIEDLQRNVSDLEKHAQDLETKLLARNQNLAEQEERRLQLEQRLSEVERLLSERTQQLADIQTANEERDRLAALEKLIQPAAAPTLDMFFGGQAEETVPDAVSHHLDLGLPQTEPVVEPLIQPKKAYLCQPKQEIQEQTAQTIDWGVDEDPWASAANEAPQTDVEHLHTRIAQLELQLSNAEQQKTELQTKAAKLMKRLKEYKTKATTTATPTVTVDNDLDSTIIEELKHQLQLQESRLSKAEEISQQHALEKEKLAKRIDVLTAGNDRMAEMKERQDMDVQMYQARIRELQEKLSQLDQWGEPAATVSSSLDGDEAARIESLQQEIQQLRQQVSELEDERTRDQAELGALRQSSQGYDEAEDNQKLELQQLRQQESELEALRTRDQSELEALRQSCQGHDETVRIATLQQDNQQLELQQLRQAIIELETLRARDQTELEALRQSSQGHDEAARIAIEQRDNQQLELQQLRQQLIELEALRARDQAELEALRQSCQGQQLSVDMASRNDEQMAQLQEKESEIVHLKQRIEELMREDQTEKLVFEILTKNQELQLLRMQVKQLEEDKEDQQVSAAPPKDDGETVEKLKSLCQQLQQEKSDMEEELRVLNNHVLSSLELEDRMKQTLLQLDTKNIEITELRRSLEILQSQNLGQNSAAEQIPDLSAINQQWEQLVEQKCGEVASIWQEHLSQREAAFKAQLEEVTQQQQRELPQSQQSTQGEATSDIMQKMQKALETQEMEIVTLKEQLAIRSAEYARLAAQYDPFRLQNRGGASGGNPASTTVSAGGPPSLTANEPLPEYVLKADLDYALMMLHQRDMRVEEMIVELVQLLEERDHLQLKLSDTLRQLETERSRVSDEPSATASSSAASSSSPSKISSAGSNSELLGTTSAAGSDLKQKLAELQTVKHSKDKVIVDEREQRLQQMLQLQKDMAKQGSGSQSGAGAVAAVAAPTSAAPTAIGVDLSQSGLRSPSMMLMDWILGNNNKEEEAGHQTTG.

3 disordered regions span residues 31–62 (LAGS…DSLK), 79–98 (ALRK…SMES), and 110–135 (KTRS…VSLL). A compositionally biased stretch (polar residues) spans 33–51 (GSSNDLSSLQNVSASTTRG). Phosphoserine is present on residues Ser-34 and Ser-35. Positions 52 to 85 (TKGKGRLDSLKENLYKQQERLTALKERALRKSQD) form a coiled coil. Over residues 79 to 91 (ALRKSQDERHKSS) the composition is skewed to basic and acidic residues. A phosphoserine mark is found at Ser-95, Ser-98, Ser-122, and Ser-133. Residues 141–175 (EKLLMLTQRTEQNRALLEQRKRDLAKSLLSVKSNI) are a coiled coil. Residues Ser-186, Ser-352, and Ser-354 each carry the phosphoserine modification. 2 coiled-coil regions span residues 220 to 607 (ESRV…AESI) and 659 to 716 (GETL…KDLI). A compositionally biased stretch (basic and acidic residues) spans 337-352 (ERQRNLELEQEQEKAS). Disordered regions lie at residues 337–366 (ERQR…DAQV), 622–662 (RPAS…GETL), 711–730 (REKD…QELS), and 1716–1753 (QAQL…GGDA). 2 stretches are compositionally biased toward low complexity: residues 717–730 (SSTS…QELS) and 1716–1740 (QAQL…QSQQ). 3 coiled-coil regions span residues 751-1733 (LFEK…QHHH), 1785-1863 (TIED…KLIQ), and 1941-2433 (NEAP…QSQN). Disordered regions lie at residues 2348–2367 (EDKE…GETV), 2484–2507 (EEVT…EATS), 2552–2578 (NRGG…TANE), and 2633–2665 (TERS…AGSN). Positions 2488-2502 (QQQQRELPQSQQSTQ) are enriched in low complexity. The stretch at 2504 to 2544 (EATSDIMQKMQKALETQEMEIVTLKEQLAIRSAEYARLAAQ) forms a coiled coil. Residues 2600 to 2641 (DMRVEEMIVELVQLLEERDHLQLKLSDTLRQLETERSRVSDE) are a coiled coil. A compositionally biased stretch (low complexity) spans 2643 to 2665 (SATASSSAASSSSPSKISSAGSN).

As to quaternary structure, interacts with CLIP-190 and spectrin separately.

It is found in the golgi apparatus. The protein localises to the cytoplasmic vesicle. The protein resides in the autophagosome. Lva and spectrin may form a Golgi-based scaffold that mediates interaction of Golgi bodies with microtubules and facilitates Golgi-derived membrane secretion required for the formation of furrows during cellularization. Under starvation conditions recruited by ema to developing autophagsosomes where it may function in autophagosome growth. In Drosophila melanogaster (Fruit fly), this protein is Protein lava lamp (lva).